We begin with the raw amino-acid sequence, 179 residues long: Protein HEADING DATE 3A (179 aa).

The protein belongs to the phosphatidylethanolamine-binding protein family. Expressed in the inner region of the SAM, stem and leaf blade vascular tissues (at protein level).

It is found in the cytoplasm. It localises to the nucleus. Functionally, probable mobile flower-promoting signal (florigen) that moves from the leaf to the shoot apical meristem (SAM) and induces flowering. Promotes the transition from vegetative growth to flowering downstream of HD1 and EHD1 under short day (SD) conditions. Acts upstream of MADS14 and MADS15. This Oryza sativa subsp. japonica (Rice) protein is Protein HEADING DATE 3A (HD3A).